The sequence spans 54 residues: CIILLLTIFEINADVKVTDCSKDEYSWCVEKCTKVRSKVRQCKVINDSVKCQCH.

3 cysteine pairs are disulfide-bonded: cysteine 20–cysteine 42, cysteine 28–cysteine 51, and cysteine 32–cysteine 53.

Expressed by the venom gland.

It is found in the secreted. The protein is Putative neurotoxin-I of Lychas mucronatus (Chinese swimming scorpion).